Reading from the N-terminus, the 374-residue chain is Alcohol dehydrogenase class-3 (374 aa).

Position 2 is an N-acetylalanine (Ala-2). Residues Cys-45, His-67, Cys-97, Cys-100, Cys-103, Cys-111, and Cys-174 each coordinate Zn(2+). At Lys-233 the chain carries N6-succinyllysine. Ser-247 carries the post-translational modification Phosphoserine. An N6-succinyllysine modification is found at Lys-315. Phosphoserine is present on residues Ser-324 and Ser-351.

Belongs to the zinc-containing alcohol dehydrogenase family. Class-III subfamily. As to quaternary structure, homodimer. Requires Zn(2+) as cofactor. In terms of tissue distribution, ubiquitous.

It localises to the cytoplasm. The enzyme catalyses a primary alcohol + NAD(+) = an aldehyde + NADH + H(+). It catalyses the reaction a secondary alcohol + NAD(+) = a ketone + NADH + H(+). The catalysed reaction is S-(hydroxymethyl)glutathione + NADP(+) = S-formylglutathione + NADPH + H(+). It carries out the reaction S-(hydroxymethyl)glutathione + NAD(+) = S-formylglutathione + NADH + H(+). The enzyme catalyses 20-oxo-(5Z,8Z,11Z,14Z)-eicosatetraenoate + NAD(+) + H2O = (5Z,8Z,11Z,14Z)-eicosatetraenedioate + NADH + 2 H(+). It catalyses the reaction 20-hydroxy-(5Z,8Z,11Z,14Z)-eicosatetraenoate + NAD(+) = 20-oxo-(5Z,8Z,11Z,14Z)-eicosatetraenoate + NADH + H(+). The catalysed reaction is S-nitrosoglutathione + NADH + H(+) = S-(hydroxysulfenamide)glutathione + NAD(+). In terms of biological role, catalyzes the oxidation of long-chain primary alcohols and the oxidation of S-(hydroxymethyl) glutathione. Also oxidizes long chain omega-hydroxy fatty acids, such as 20-HETE, producing both the intermediate aldehyde, 20-oxoarachidonate and the end product, a dicarboxylic acid, (5Z,8Z,11Z,14Z)-eicosatetraenedioate. Class-III ADH is remarkably ineffective in oxidizing ethanol. Required for clearance of cellular formaldehyde, a cytotoxic and carcinogenic metabolite that induces DNA damage. Also acts as a S-nitroso-glutathione reductase by catalyzing the NADH-dependent reduction of S-nitrosoglutathione, thereby regulating protein S-nitrosylation. The protein is Alcohol dehydrogenase class-3 of Mus musculus (Mouse).